A 209-amino-acid chain; its full sequence is Probable glutathione peroxidase 8 (209 aa).

An N-acetylmethionine modification is found at Met1. Residues 18–40 (VFAVLLSIVLCTVTLFLLQLKFL) traverse the membrane as a helical segment. The active site involves Cys79.

The protein belongs to the glutathione peroxidase family.

It localises to the membrane. The catalysed reaction is 2 glutathione + H2O2 = glutathione disulfide + 2 H2O. This Homo sapiens (Human) protein is Probable glutathione peroxidase 8 (GPX8).